The sequence spans 219 residues: 2,5-diamino-6-ribosylamino-4(3H)-pyrimidinone 5'-phosphate reductase (219 aa).

NADP(+) is bound by residues Thr-52, Asp-56, 87–90 (SRCR), Val-134, and 156–159 (GGTL).

Belongs to the HTP reductase family. As to quaternary structure, homodimer.

The catalysed reaction is 2,5-diamino-6-(1-D-ribitylamino)pyrimidin-4(3H)-one 5'-phosphate + NADP(+) = 2,5-diamino-6-(1-D-ribosylamino)pyrimidin-4(3H)-one 5'-phosphate + NADPH + H(+). The enzyme catalyses 2,5-diamino-6-(1-D-ribitylamino)pyrimidin-4(3H)-one 5'-phosphate + NAD(+) = 2,5-diamino-6-(1-D-ribosylamino)pyrimidin-4(3H)-one 5'-phosphate + NADH + H(+). Its pathway is cofactor biosynthesis; riboflavin biosynthesis. In terms of biological role, catalyzes an early step in riboflavin biosynthesis, the NADPH-dependent reduction of the ribose side chain of 2,5-diamino-6-ribosylamino-4(3H)-pyrimidinone 5'-phosphate, yielding 2,5-diamino-6-ribitylamino-4(3H)-pyrimidinone 5'-phosphate. This Archaeoglobus fulgidus (strain ATCC 49558 / DSM 4304 / JCM 9628 / NBRC 100126 / VC-16) protein is 2,5-diamino-6-ribosylamino-4(3H)-pyrimidinone 5'-phosphate reductase.